Here is a 63-residue protein sequence, read N- to C-terminus: MASKKVHQINVKGFFDMDVMEVTEQTKEAEYTYDFKEILSEFNGKNVSITVKEENELPVKGVE.

As to quaternary structure, octamer.

This is SPbeta prophage-derived uncharacterized protein YonK (yonK) from Bacillus subtilis (strain 168).